We begin with the raw amino-acid sequence, 396 residues long: Phosphoglycerate kinase (396 aa).

Substrate-binding positions include 21 to 23 (DFN), arginine 36, 59 to 62 (HLGK), arginine 119, and arginine 156. Residues lysine 206, glycine 294, glutamate 325, and 352-355 (GGDS) contribute to the ATP site.

It belongs to the phosphoglycerate kinase family. As to quaternary structure, monomer.

It localises to the cytoplasm. The catalysed reaction is (2R)-3-phosphoglycerate + ATP = (2R)-3-phospho-glyceroyl phosphate + ADP. Its pathway is carbohydrate degradation; glycolysis; pyruvate from D-glyceraldehyde 3-phosphate: step 2/5. In Listeria monocytogenes serotype 4b (strain CLIP80459), this protein is Phosphoglycerate kinase.